A 355-amino-acid chain; its full sequence is Ribosomal RNA large subunit methyltransferase M (355 aa).

S-adenosyl-L-methionine-binding positions include serine 191, 224–227 (APGG), aspartate 243, aspartate 263, and aspartate 279. Lysine 308 functions as the Proton acceptor in the catalytic mechanism.

This sequence belongs to the class I-like SAM-binding methyltransferase superfamily. RNA methyltransferase RlmE family. RlmM subfamily. As to quaternary structure, monomer.

The protein resides in the cytoplasm. The catalysed reaction is cytidine(2498) in 23S rRNA + S-adenosyl-L-methionine = 2'-O-methylcytidine(2498) in 23S rRNA + S-adenosyl-L-homocysteine + H(+). Functionally, catalyzes the 2'-O-methylation at nucleotide C2498 in 23S rRNA. This chain is Ribosomal RNA large subunit methyltransferase M, found in Stenotrophomonas maltophilia (strain K279a).